Here is a 246-residue protein sequence, read N- to C-terminus: 3'(2'),5'-bisphosphate nucleotidase CysQ (246 aa).

Residues Glu64, Asp83, Leu85, Asp86, and Asp205 each coordinate Mg(2+). Glu64 serves as a coordination point for substrate. Residues 85–88 (LDGT) and Asp205 contribute to the substrate site.

It belongs to the inositol monophosphatase superfamily. CysQ family. Mg(2+) is required as a cofactor.

It is found in the cell inner membrane. It catalyses the reaction adenosine 3',5'-bisphosphate + H2O = AMP + phosphate. In terms of biological role, converts adenosine-3',5'-bisphosphate (PAP) to AMP. The polypeptide is 3'(2'),5'-bisphosphate nucleotidase CysQ (Escherichia coli O157:H7).